Consider the following 92-residue polypeptide: Small ribosomal subunit protein uS19 (92 aa).

Belongs to the universal ribosomal protein uS19 family.

In terms of biological role, protein S19 forms a complex with S13 that binds strongly to the 16S ribosomal RNA. The chain is Small ribosomal subunit protein uS19 from Photobacterium profundum (strain SS9).